The following is a 79-amino-acid chain: D-alanyl carrier protein (79 aa).

In terms of domain architecture, Carrier spans alanine 2–arginine 79. Serine 37 carries the post-translational modification O-(pantetheine 4'-phosphoryl)serine.

The protein belongs to the DltC family. 4'-phosphopantetheine is transferred from CoA to a specific serine of apo-DCP.

The protein resides in the cytoplasm. Its pathway is cell wall biogenesis; lipoteichoic acid biosynthesis. Carrier protein involved in the D-alanylation of lipoteichoic acid (LTA). The loading of thioester-linked D-alanine onto DltC is catalyzed by D-alanine--D-alanyl carrier protein ligase DltA. The DltC-carried D-alanyl group is further transferred to cell membrane phosphatidylglycerol (PG) by forming an ester bond, probably catalyzed by DltD. D-alanylation of LTA plays an important role in modulating the properties of the cell wall in Gram-positive bacteria, influencing the net charge of the cell wall. This is D-alanyl carrier protein from Bacillus anthracis (strain CDC 684 / NRRL 3495).